Consider the following 393-residue polypeptide: MKKIVLAYSGGLDTSVILKWLQENYNCEVVVFTADLGQNDDMSAIRQKAAASNVKEIFIEDLKEEFVKDFVFPMFRANTVYEGYYLLGTSIARPLIAKRQIEIAHLTGADAVAHGATGKGNDQIRFEFGYYSCDPNIKVIAPWRQWELTSRNSLIEYAKKHGIDVPLDKASEPPYSIDANLLHTSYEGKSLEDPYIEPDYTMLSKSVIPELASDTPEYIEISFKNGDPHAINNVPLSPANLLQQLNIIGGRHGIGIIDIVENRYIGIKSRGVYETPGGTILLHAHRAIESITLDREAAHLKDEIMPRYAKLIYNGYWWTTERKMLQALIDKSQDKVNGVVRLKLYKGSVMVVGRTSENSLYSHNLASFDSSGNYNHTDAEGFIKINSLRLRNS.

Residues 7-15 and alanine 34 each bind ATP; that span reads AYSGGLDTS. Positions 85 and 90 each coordinate L-citrulline. Glycine 115 contacts ATP. Residues threonine 117, asparagine 121, and aspartate 122 each contribute to the L-aspartate site. Asparagine 121 is a binding site for L-citrulline. 5 residues coordinate L-citrulline: arginine 125, serine 176, serine 185, glutamate 261, and tyrosine 273.

Belongs to the argininosuccinate synthase family. Type 1 subfamily. As to quaternary structure, homotetramer.

It localises to the cytoplasm. The catalysed reaction is L-citrulline + L-aspartate + ATP = 2-(N(omega)-L-arginino)succinate + AMP + diphosphate + H(+). It functions in the pathway amino-acid biosynthesis; L-arginine biosynthesis; L-arginine from L-ornithine and carbamoyl phosphate: step 2/3. This Ehrlichia chaffeensis (strain ATCC CRL-10679 / Arkansas) protein is Argininosuccinate synthase.